The chain runs to 363 residues: Putative serine/threonine-protein kinase gskl-1 (363 aa).

In terms of domain architecture, Protein kinase spans 20-304 (FGAHKLCGSG…AIDVLKMPLF (285 aa)). Residues 26–34 (CGSGRFSNV) and Lys-50 contribute to the ATP site. The active-site Proton acceptor is the Asp-146. The tract at residues 311-363 (PPKKRSNGVEMPNLASYTEMHHKREPETEVVADIQTTEKAEKESDSTNEELED) is disordered. A compositionally biased stretch (basic and acidic residues) spans 346-355 (TTEKAEKESD).

The protein belongs to the protein kinase superfamily. Ser/Thr protein kinase family. In terms of tissue distribution, expressed during multiple stages of spermatogenesis, in males and hermaphrodites (at protein level).

It localises to the cytoplasm. Its subcellular location is the cell projection. It is found in the pseudopodium. The catalysed reaction is L-seryl-[protein] + ATP = O-phospho-L-seryl-[protein] + ADP + H(+). The enzyme catalyses L-threonyl-[protein] + ATP = O-phospho-L-threonyl-[protein] + ADP + H(+). Its function is as follows. May be an autophosphorylating tyrosine kinase, a bifunctional (serine/tyrosine-specific) protein kinase, or a serine kinase that is a substrate for an associated tyrosine kinase. Acting in concert with putative serine/threonine-protein kinase gskl-2, required for sister chromatid segregation and spermatid budding during male meiosis. Plays a role in regulating female meiosis II, together with gskl-2. Involved in sperm pseudopod formation and function, together with gskl-2. The polypeptide is Putative serine/threonine-protein kinase gskl-1 (Caenorhabditis elegans).